The primary structure comprises 102 residues: MGSKMASATRVVQVVKPHAPLIKFPNRRDKPKLSASEALGSAALPSHSSAISQHSKGSTSPDLLMHQGPPDTAEIIKSLPQKYRRKPMSQEEMEFIQRGGPE.

Glycine 2 bears the N-acetylglycine mark. Residue lysine 4 is modified to N6-succinyllysine. The tract at residues 23 to 70 (KFPNRRDKPKLSASEALGSAALPSHSSAISQHSKGSTSPDLLMHQGPP) is disordered. The segment covering 33-46 (LSASEALGSAALPS) has biased composition (low complexity). Positions 47-61 (HSSAISQHSKGSTSP) are enriched in polar residues. Phosphoserine occurs at positions 48, 60, and 89.

Belongs to the alpha-ketoglutarate dehydrogenase component 4 family. Component of the 2-oxoglutarate dehydrogenase complex (OGDHC), composed of OGDH (2-oxoglutarate dehydrogenase; also called E1 subunit), DLST (dihydrolipoamide succinyltransferase; also called E2 subunit) and DLD (dihydrolipoamide dehydrogenase; also called E3 subunit), and the assembly factor KGD4. Within OGDHC complex, interacts (via N-terminus) with E3 subunit and (via C-terminus) with E2 subunit.

It is found in the mitochondrion. In terms of biological role, molecular adapter that is necessary to form a stable 2-oxoglutarate dehydrogenase enzyme complex (OGDHC). Enables the specific recruitment of E3 subunit to E2 subunit in the 2-oxoglutarate dehydrogenase complex (OGDHC). The polypeptide is Alpha-ketoglutarate dehydrogenase component 4 (Mus musculus (Mouse)).